Here is a 181-residue protein sequence, read N- to C-terminus: Ribulose bisphosphate carboxylase small subunit, chloroplastic (181 aa).

The N-terminal 54 residues, Met1–Ser54, are a transit peptide targeting the chloroplast.

It belongs to the RuBisCO small chain family. Heterohexadecamer of 8 large and 8 small subunits.

Its subcellular location is the plastid. It localises to the chloroplast. Functionally, ruBisCO catalyzes two reactions: the carboxylation of D-ribulose 1,5-bisphosphate, the primary event in carbon dioxide fixation, as well as the oxidative fragmentation of the pentose substrate. Both reactions occur simultaneously and in competition at the same active site. Although the small subunit is not catalytic it is essential for maximal activity. The protein is Ribulose bisphosphate carboxylase small subunit, chloroplastic of Raphanus sativus (Radish).